Reading from the N-terminus, the 77-residue chain is Bradykinin-potentiating peptide (77 aa).

A signal peptide spans 1–22 (MNKKTLLVIFIVTLLIADEVNS). The propeptide occupies 74 to 77 (RRRR).

Belongs to the non-disulfide-bridged peptide (NDBP) superfamily. Long chain multifunctional peptide (group 2) family. Expressed by the venom gland.

The protein resides in the secreted. Its function is as follows. Antimicrobial peptide. May also inhibit angiotensin-converting enzyme (ACE) and potentiate bradykinin (BK). This is Bradykinin-potentiating peptide from Tityus discrepans (Venezuelan scorpion).